We begin with the raw amino-acid sequence, 266 residues long: Hydroxyethylthiazole kinase (266 aa).

M46 is a substrate binding site. Residues R122 and S168 each contribute to the ATP site. A substrate-binding site is contributed by G195.

The protein belongs to the Thz kinase family. Mg(2+) serves as cofactor.

The catalysed reaction is 5-(2-hydroxyethyl)-4-methylthiazole + ATP = 4-methyl-5-(2-phosphooxyethyl)-thiazole + ADP + H(+). The protein operates within cofactor biosynthesis; thiamine diphosphate biosynthesis; 4-methyl-5-(2-phosphoethyl)-thiazole from 5-(2-hydroxyethyl)-4-methylthiazole: step 1/1. In terms of biological role, catalyzes the phosphorylation of the hydroxyl group of 4-methyl-5-beta-hydroxyethylthiazole (THZ). The sequence is that of Hydroxyethylthiazole kinase from Oleidesulfovibrio alaskensis (strain ATCC BAA-1058 / DSM 17464 / G20) (Desulfovibrio alaskensis).